The chain runs to 751 residues: Polyadenylate-binding protein, cytoplasmic and nuclear (751 aa).

Polar residues-rich tracts occupy residues 1-26 (MSAE…NPAA) and 36-50 (ESAS…NQPH). Positions 1-50 (MSAEVSTTPAADNTVNGTPEATNPAATSAPEVTAVESASPSATPSANQPH) are disordered. 4 consecutive RRM domains span residues 52-130 (ASLY…WSQR), 140-217 (GNVF…HHIS), 233-310 (TNVY…RAQK), and 336-458 (VNLY…LAQR). Disordered regions lie at residues 371–413 (TVTA…KKTE) and 601–643 (GQGM…REEV). Positions 379–413 (ESEKEKESNKENEKEGEEKTEEKPKESEEEAKKTE) are enriched in basic and acidic residues. A compositionally biased stretch (gly residues) spans 603–629 (GMRGPGYGQGRGGAPVQGGPRPQGGRG). The region spanning 646 to 723 (TGGLTAQTLN…ALSVYDEYMK (78 aa)) is the PABC domain. The interval 725–751 (KGEGEAPAEPAKPKEDAAETATEENKS) is disordered. A compositionally biased stretch (basic and acidic residues) spans 735–751 (AKPKEDAAETATEENKS).

This sequence belongs to the polyadenylate-binding protein type-1 family.

It is found in the cytoplasm. The protein resides in the nucleus. Binds the poly(A) tail of mRNA. Appears to be an important mediator of the multiple roles of the poly(A) tail in mRNA biogenesis, stability and translation. In the nucleus, involved in both mRNA cleavage and polyadenylation. Is also required for efficient mRNA export to the cytoplasm. Acts in concert with a poly(A)-specific nuclease (PAN) to affect poly(A) tail shortening, which may occur concomitantly with either nucleocytoplasmic mRNA transport or translational initiation. In the cytoplasm, stimulates translation initiation and regulates mRNA decay through translation termination-coupled poly(A) shortening, probably mediated by PAN. The sequence is that of Polyadenylate-binding protein, cytoplasmic and nuclear (pab1) from Neosartorya fischeri (strain ATCC 1020 / DSM 3700 / CBS 544.65 / FGSC A1164 / JCM 1740 / NRRL 181 / WB 181) (Aspergillus fischerianus).